The sequence spans 2867 residues: Reticulocyte-binding protein 2 (2867 aa).

The first 21 residues, 1–21, serve as a signal peptide directing secretion; that stretch reads MEKNVLWVIFYNFLVILLASC. The Extracellular segment spans residues 22-2805; it reads NDSNRSKSNS…TAKEAIGKTR (2784 aa). 3 disordered regions span residues 52 to 73, 2650 to 2682, and 2712 to 2799; these read KYNNAKTEDNIGNQINNDNNHN, ETKTSPSGMKAKEEKVPPKETENRAQDNLASVP, and DNTH…TAKE. Over residues 61–73 the composition is skewed to low complexity; sequence NIGNQINNDNNHN. Positions 2659-2674 are enriched in basic and acidic residues; the sequence is KAKEEKVPPKETENRA. Over residues 2725-2736 the composition is skewed to polar residues; that stretch reads DSISAPQEQVEY. Over residues 2743 to 2754 the composition is skewed to acidic residues; sequence ENDETTEEESEH. Residues 2755-2799 show a composition bias toward basic and acidic residues; it reads DDAHDDTHDDTHDDTHDDTHDDTHDDTHDDTHDESQTGRDSTAKE. A run of 7 repeats spans residues 2758-2761, 2762-2765, 2766-2769, 2770-2773, 2774-2777, 2778-2781, and 2782-2785. A 7 X 4 AA tandem repeats of H-D-D-T region spans residues 2758–2785; the sequence is HDDTHDDTHDDTHDDTHDDTHDDTHDDT. A helical membrane pass occupies residues 2806-2826; the sequence is LAGAVIIAMSVLSGFIIIVFK. Residues 2827 to 2867 lie on the Cytoplasmic side of the membrane; it reads DKDEEEKDHNEHGYNEAFGEHDEYNMHDKEEVIEVCFNEED.

Its subcellular location is the cell membrane. Functionally, involved in reticulocyte adhesion. Specifically binds to human reticulocyte cells. The polypeptide is Reticulocyte-binding protein 2 (RBP-2) (Plasmodium vivax (strain Belem)).